Reading from the N-terminus, the 225-residue chain is Myelin-associated neurite-outgrowth inhibitor (225 aa).

Residues 1-58 are Cytoplasmic-facing; it reads MNPVYSPGSSGVPYANAKGIGYPAGFPMGYAAAAPAYSPNMYAGPNPAFQQELEHPAH. Residues 59–75 form a helical membrane-spanning segment; sequence VSSGVQMFMFGHAFSVA. The Extracellular segment spans residues 76-173; that stretch reads RNGAIPSGYT…PAPIQSPRGN (98 aa). The chain crosses the membrane as a helical span at residues 174–193; sequence GVAMGMVAGTTMAMSAGTLL. At 194-225 the chain is on the cytoplasmic side; the sequence is TSHYPSPVAPQVTMPTYRPPGTPTYSYVPPQW.

It belongs to the FAM168 family.

The protein localises to the cytoplasm. The protein resides in the perinuclear region. It localises to the cell membrane. Its subcellular location is the cell projection. It is found in the axon. Inhibitor of neuronal axonal outgrowth. In Xenopus laevis (African clawed frog), this protein is Myelin-associated neurite-outgrowth inhibitor (fam168b).